A 75-amino-acid chain; its full sequence is Exodeoxyribonuclease 7 small subunit (75 aa).

Belongs to the XseB family. In terms of assembly, heterooligomer composed of large and small subunits.

It localises to the cytoplasm. The enzyme catalyses Exonucleolytic cleavage in either 5'- to 3'- or 3'- to 5'-direction to yield nucleoside 5'-phosphates.. Functionally, bidirectionally degrades single-stranded DNA into large acid-insoluble oligonucleotides, which are then degraded further into small acid-soluble oligonucleotides. The sequence is that of Exodeoxyribonuclease 7 small subunit from Caldanaerobacter subterraneus subsp. tengcongensis (strain DSM 15242 / JCM 11007 / NBRC 100824 / MB4) (Thermoanaerobacter tengcongensis).